The following is a 380-amino-acid chain: 4-hydroxy-tetrahydrodipicolinate synthase, chloroplastic (380 aa).

The disordered stretch occupies residues 1-44 (MISPTNLLPARKITPVSNGGAATASPSSPSVAARPRRLPSGLQS). The transit peptide at 1–54 (MISPTNLLPARKITPVSNGGAATASPSSPSVAARPRRLPSGLQSVTGRGKVSLA) directs the protein to the chloroplast. Residues 21–33 (AATASPSSPSVAA) show a composition bias toward low complexity. Thr-123 is a binding site for pyruvate. Tyr-209 acts as the Proton donor/acceptor in catalysis. Catalysis depends on Lys-237, which acts as the Schiff-base intermediate with substrate. Ile-276 is a pyruvate binding site.

The protein belongs to the DapA family. As to quaternary structure, tetramer of modified subunits derived from two genes in different combinations.

The protein localises to the plastid. It localises to the chloroplast. The catalysed reaction is L-aspartate 4-semialdehyde + pyruvate = (2S,4S)-4-hydroxy-2,3,4,5-tetrahydrodipicolinate + H2O + H(+). It functions in the pathway amino-acid biosynthesis; L-lysine biosynthesis via DAP pathway; (S)-tetrahydrodipicolinate from L-aspartate: step 3/4. Its activity is regulated as follows. Sensitive to lysine inhibition. This inhibition increase in an allosteric manner with increasing concentration of the inhibitor. Its function is as follows. Catalyzes the condensation of (S)-aspartate-beta-semialdehyde [(S)-ASA] and pyruvate to 4-hydroxy-tetrahydrodipicolinate (HTPA). This is 4-hydroxy-tetrahydrodipicolinate synthase, chloroplastic from Zea mays (Maize).